The following is a 173-amino-acid chain: Crossover junction endodeoxyribonuclease RuvC (173 aa).

Residues Asp8, Glu67, and Asp139 contribute to the active site. Mg(2+) is bound by residues Asp8, Glu67, and Asp139.

The protein belongs to the RuvC family. As to quaternary structure, homodimer which binds Holliday junction (HJ) DNA. The HJ becomes 2-fold symmetrical on binding to RuvC with unstacked arms; it has a different conformation from HJ DNA in complex with RuvA. In the full resolvosome a probable DNA-RuvA(4)-RuvB(12)-RuvC(2) complex forms which resolves the HJ. The cofactor is Mg(2+).

The protein resides in the cytoplasm. It carries out the reaction Endonucleolytic cleavage at a junction such as a reciprocal single-stranded crossover between two homologous DNA duplexes (Holliday junction).. Functionally, the RuvA-RuvB-RuvC complex processes Holliday junction (HJ) DNA during genetic recombination and DNA repair. Endonuclease that resolves HJ intermediates. Cleaves cruciform DNA by making single-stranded nicks across the HJ at symmetrical positions within the homologous arms, yielding a 5'-phosphate and a 3'-hydroxyl group; requires a central core of homology in the junction. The consensus cleavage sequence is 5'-(A/T)TT(C/G)-3'. Cleavage occurs on the 3'-side of the TT dinucleotide at the point of strand exchange. HJ branch migration catalyzed by RuvA-RuvB allows RuvC to scan DNA until it finds its consensus sequence, where it cleaves and resolves the cruciform DNA. This is Crossover junction endodeoxyribonuclease RuvC from Cronobacter sakazakii (strain ATCC BAA-894) (Enterobacter sakazakii).